The sequence spans 270 residues: NAD kinase (270 aa).

The active-site Proton acceptor is the aspartate 63. NAD(+) contacts are provided by residues 63 to 64 (DG), 131 to 132 (NE), lysine 142, arginine 159, aspartate 161, 172 to 177 (TAYAMS), alanine 196, and glutamine 230.

Belongs to the NAD kinase family. The cofactor is a divalent metal cation.

The protein resides in the cytoplasm. It catalyses the reaction NAD(+) + ATP = ADP + NADP(+) + H(+). In terms of biological role, involved in the regulation of the intracellular balance of NAD and NADP, and is a key enzyme in the biosynthesis of NADP. Catalyzes specifically the phosphorylation on 2'-hydroxyl of the adenosine moiety of NAD to yield NADP. The chain is NAD kinase from Methanoculleus marisnigri (strain ATCC 35101 / DSM 1498 / JR1).